The sequence spans 252 residues: MSKDKVTVITSPSTEELVSLVNSALLEEAMLTIFARCKVHYDGRAKSELGSGDRVIIVKPDGSFLIHQSKKREPVNWQPPGSRVRLELRENPVLVSIRRKPRETLEVELEEVYMVSVFRAEDYEELALTGSEAEMAELIFENPEVIEPGFKPLFREKAIGTGIVDVLGRDSDGNIVVLELKRRRAELHAVRQLKSYVEILREEYGDKVRGILVAPSLTSGAKRLLEKEGLEFRKLEPPKRDSKKKGRQKTLF.

It belongs to the NucS endonuclease family.

It is found in the cytoplasm. Functionally, cleaves both 3' and 5' ssDNA extremities of branched DNA structures. The protein is Endonuclease NucS of Thermococcus kodakarensis (strain ATCC BAA-918 / JCM 12380 / KOD1) (Pyrococcus kodakaraensis (strain KOD1)).